Here is a 43-residue protein sequence, read N- to C-terminus: uncharacterized protein (43 aa).

Positions 13–43 (QLPRLSRPRQSHLPAQTPQPRLSYPKTRRQI) are disordered.

This is an uncharacterized protein from Clover yellow mosaic virus (CYMV).